Consider the following 377-residue polypeptide: Prostaglandin E synthase 2 (377 aa).

The Lumenal portion of the chain corresponds to methionine 1–arginine 57. A helical transmembrane segment spans residues leucine 58–histidine 74. Over threonine 75–histidine 377 the chain is Cytoplasmic. Positions serine 90–lysine 193 constitute a Glutaredoxin domain. Serine 95 bears the Phosphoserine mark. Glutathione contacts are provided by residues valine 148 and aspartate 164–serine 165. Residues tyrosine 263 to histidine 377 enclose the GST C-terminal domain.

It belongs to the GST superfamily. As to quaternary structure, homodimer. May interact with CEBPB. Interacts with EXOSC10. Synthesized as a Golgi membrane-associated protein, and the proteolytic removal of the N-terminal hydrophobic domain leads to the formation of a mature cytosolic enzyme. As to expression, widely expressed. Expressed in the heart, including apex, inter-ventricular septum, both atria and ventricles, but not in the aorta. Also expressed in fetal heart. Detected in various regions of the brain: cerebellum; occipital, frontal and parietal lobes. Also expressed in the lymph nodes, skeletal muscle, kidney and trachea, but not in the thymus or lung. Overexpressed in colorectal cancer.

The protein resides in the golgi apparatus membrane. Its subcellular location is the cytoplasm. It localises to the perinuclear region. The enzyme catalyses prostaglandin H2 = prostaglandin E2. The catalysed reaction is prostaglandin H2 = (12S)-hydroxy-(5Z,8E,10E)-heptadecatrienoate + malonaldehyde. It functions in the pathway lipid metabolism; prostaglandin biosynthesis. Isomerase activity is increased by sulfhydril compounds. Dithiothreitol (DTT) is most effective, followed by dihydrolipoic acid, glutathione (GSH) and 2-mercaptoethanol. Functionally, isomerase that catalyzes the conversion of PGH2 into the more stable prostaglandin E2 (PGE2) (in vitro). The biological function and the GSH-dependent property of PTGES2 is still under debate. In vivo, PTGES2 could form a complex with GSH and heme and would not participate in PGE2 synthesis but would catalyze the degradation of prostaglandin E2 H2 (PGH2) to 12(S)-hydroxy-5(Z),8(E),10(E)-heptadecatrienoic acid (HHT) and malondialdehyde (MDA). The polypeptide is Prostaglandin E synthase 2 (PTGES2) (Homo sapiens (Human)).